The sequence spans 117 residues: Carboxysome shell protein CcmK4 (117 aa).

The BMC domain maps to 5–91 (AVGSLETKGF…PHENVECVLP (87 aa)).

Belongs to the bacterial microcompartments protein family. CcmK subfamily. In terms of assembly, crystallizes as a homohexamer. Interacts stably with CcmK3, forming heterohexamers that can make dodecamers. Heterohexamers have a 1:2 CcmK3:CcmK4 stoichiometry. Upon expression in E.coli forms large aggregates.

The protein localises to the carboxysome. Its function is as follows. A probably essential, minor shell protein of the carboxysome, a polyhedral inclusion where RuBisCO (ribulose bisphosphate carboxylase, rbcL-rbcS) is sequestered. Hexamers form sheets that form the facets of the polyhedral carboxysome. In PCC 7418 there are several CcmK paralogs with presumably functional differences. This subunit can probably make both homohexamers and heterohexamers with CcmK3. Both hexamers can also make dodecamers, formation depends on buffer conditions. This is Carboxysome shell protein CcmK4 from Halothece sp. (strain PCC 7418) (Synechococcus sp. (strain PCC 7418)).